Here is a 635-residue protein sequence, read N- to C-terminus: 1-deoxy-D-xylulose-5-phosphate synthase (635 aa).

Residues H77 and 118–120 contribute to the thiamine diphosphate site; that span reads GHA. D150 contributes to the Mg(2+) binding site. Thiamine diphosphate-binding positions include 151–152, N179, Y290, and E372; that span reads AS. N179 lines the Mg(2+) pocket.

This sequence belongs to the transketolase family. DXPS subfamily. In terms of assembly, homodimer. It depends on Mg(2+) as a cofactor. The cofactor is thiamine diphosphate.

The catalysed reaction is D-glyceraldehyde 3-phosphate + pyruvate + H(+) = 1-deoxy-D-xylulose 5-phosphate + CO2. Its pathway is metabolic intermediate biosynthesis; 1-deoxy-D-xylulose 5-phosphate biosynthesis; 1-deoxy-D-xylulose 5-phosphate from D-glyceraldehyde 3-phosphate and pyruvate: step 1/1. Functionally, catalyzes the acyloin condensation reaction between C atoms 2 and 3 of pyruvate and glyceraldehyde 3-phosphate to yield 1-deoxy-D-xylulose-5-phosphate (DXP). This Leptospira borgpetersenii serovar Hardjo-bovis (strain JB197) protein is 1-deoxy-D-xylulose-5-phosphate synthase.